The sequence spans 485 residues: 2-succinylbenzoate--CoA ligase (485 aa).

It belongs to the ATP-dependent AMP-binding enzyme family. MenE subfamily.

It catalyses the reaction 2-succinylbenzoate + ATP + CoA = 2-succinylbenzoyl-CoA + AMP + diphosphate. It functions in the pathway quinol/quinone metabolism; 1,4-dihydroxy-2-naphthoate biosynthesis; 1,4-dihydroxy-2-naphthoate from chorismate: step 5/7. The protein operates within quinol/quinone metabolism; menaquinone biosynthesis. Converts 2-succinylbenzoate (OSB) to 2-succinylbenzoyl-CoA (OSB-CoA). This is 2-succinylbenzoate--CoA ligase from Enterococcus faecalis (strain ATCC 700802 / V583).